A 375-amino-acid polypeptide reads, in one-letter code: Trichodiene synthase (375 aa).

The protein belongs to the trichodiene synthase family.

It carries out the reaction (2E,6E)-farnesyl diphosphate = trichodiene + diphosphate. Its pathway is sesquiterpene biosynthesis; trichothecene biosynthesis. Functionally, TS is a member of the terpene cyclase group of enzymes. It catalyzes the isomerization and cyclization of farnesyl pyro-phosphate to form trichodiene, the first cyclic intermediate in the biosynthetic pathway for trichothecenes. It serves to branch trichothecene biosynthesis from the isoprenoid pathway. In Gibberella zeae (strain ATCC MYA-4620 / CBS 123657 / FGSC 9075 / NRRL 31084 / PH-1) (Wheat head blight fungus), this protein is Trichodiene synthase (TRI5).